The following is a 922-amino-acid chain: Dual serine/threonine and tyrosine protein kinase (922 aa).

The region spanning 645–899 (PKLGRELGRG…PLLGIVEPSL (255 aa)) is the Protein kinase domain. Residues 651 to 659 (LGRGQYGVV) and lysine 674 each bind ATP. Residue aspartate 770 is the Proton acceptor of the active site.

Belongs to the protein kinase superfamily. Ser/Thr protein kinase family.

Its subcellular location is the cytoplasm. It localises to the cell membrane. The protein resides in the apical cell membrane. It is found in the basolateral cell membrane. The protein localises to the cell junction. It catalyses the reaction L-seryl-[protein] + ATP = O-phospho-L-seryl-[protein] + ADP + H(+). The enzyme catalyses L-threonyl-[protein] + ATP = O-phospho-L-threonyl-[protein] + ADP + H(+). The catalysed reaction is L-tyrosyl-[protein] + ATP = O-phospho-L-tyrosyl-[protein] + ADP + H(+). Its function is as follows. May act as a positive regulator of ERK phosphorylation downstream of fibroblast growth factor-receptor activation. May induce both caspase-dependent apoptosis and caspase-independent cell death. May play a role in the embryonic development. This Tetraodon nigroviridis (Spotted green pufferfish) protein is Dual serine/threonine and tyrosine protein kinase.